We begin with the raw amino-acid sequence, 936 residues long: Translation initiation factor IF-2 (936 aa).

Residues 102-332 are disordered; the sequence is PEPGPVLKKD…SGSRQKFRKM (231 aa). Over residues 108–119 the composition is skewed to basic and acidic residues; that stretch reads LKKDHVHEEPEK. Over residues 127-137 the composition is skewed to acidic residues; that stretch reads SEPEVEPEVEP. Residues 151-160 are compositionally biased toward low complexity; the sequence is PTEAVSVPEP. Residues 182 to 194 are compositionally biased toward polar residues; sequence QSSTMKAQASPEM. Composition is skewed to basic and acidic residues over residues 217–227 and 237–267; these read SALDRGSESDR and KEQADELKGEFENAGKAEGDKKPAKSGEAKT. A compositionally biased stretch (low complexity) spans 272-281; the sequence is KAAGTTGSAA. The span at 287 to 297 shows a compositional bias: basic residues; it reads SKKKKGGKKKK. The tr-type G domain occupies 433–603; the sequence is IRPPVVTIMG…LMEAEIRELK (171 aa). The tract at residues 442-449 is G1; the sequence is GHVDHGKT. Residue 442-449 coordinates GTP; it reads GHVDHGKT. Positions 467 to 471 are G2; that stretch reads GITQH. A G3 region spans residues 489 to 492; sequence DTPG. GTP contacts are provided by residues 489–493 and 543–546; these read DTPGH and NKID. The tract at residues 543-546 is G4; sequence NKID. The G5 stretch occupies residues 579–581; sequence SAK.

This sequence belongs to the TRAFAC class translation factor GTPase superfamily. Classic translation factor GTPase family. IF-2 subfamily.

It is found in the cytoplasm. Functionally, one of the essential components for the initiation of protein synthesis. Protects formylmethionyl-tRNA from spontaneous hydrolysis and promotes its binding to the 30S ribosomal subunits. Also involved in the hydrolysis of GTP during the formation of the 70S ribosomal complex. The sequence is that of Translation initiation factor IF-2 from Prosthecochloris aestuarii (strain DSM 271 / SK 413).